The sequence spans 142 residues: Large ribosomal subunit protein uL11 (142 aa).

Belongs to the universal ribosomal protein uL11 family. In terms of assembly, part of the ribosomal stalk of the 50S ribosomal subunit. Interacts with L10 and the large rRNA to form the base of the stalk. L10 forms an elongated spine to which L12 dimers bind in a sequential fashion forming a multimeric L10(L12)X complex. One or more lysine residues are methylated.

Functionally, forms part of the ribosomal stalk which helps the ribosome interact with GTP-bound translation factors. This is Large ribosomal subunit protein uL11 from Glaesserella parasuis serovar 5 (strain SH0165) (Haemophilus parasuis).